The following is a 491-amino-acid chain: Chromosomal replication initiator protein DnaA (491 aa).

The domain I, interacts with DnaA modulators stretch occupies residues 1–69 (MTTWDKCLKK…TIQECHGNDL (69 aa)). Positions 69-154 (LIIEYSNKKF…KEDEEYSFGL (86 aa)) are domain II. The segment at 155–371 (PLKEKYVFDS…GALNRVLTTS (217 aa)) is domain III, AAA+ region. 4 residues coordinate ATP: Gly199, Gly201, Lys202, and Thr203. Positions 372-491 (KFNHKDPTIE…YELLLNKISR (120 aa)) are domain IV, binds dsDNA.

Belongs to the DnaA family. As to quaternary structure, oligomerizes as a right-handed, spiral filament on DNA at oriC.

It is found in the cytoplasm. In terms of biological role, plays an essential role in the initiation and regulation of chromosomal replication. ATP-DnaA binds to the origin of replication (oriC) to initiate formation of the DNA replication initiation complex once per cell cycle. Binds the DnaA box (a 9 base pair repeat at the origin) and separates the double-stranded (ds)DNA. Forms a right-handed helical filament on oriC DNA; dsDNA binds to the exterior of the filament while single-stranded (ss)DNA is stabiized in the filament's interior. The ATP-DnaA-oriC complex binds and stabilizes one strand of the AT-rich DNA unwinding element (DUE), permitting loading of DNA polymerase. After initiation quickly degrades to an ADP-DnaA complex that is not apt for DNA replication. Binds acidic phospholipids. The chain is Chromosomal replication initiator protein DnaA from Francisella tularensis subsp. tularensis (strain WY96-3418).